A 164-amino-acid chain; its full sequence is MTRLPKLAVFDLDYTLWPFWVDTHVDPPFHKSSDGTVRDRRGQNIQLYPEVPEVLGRLQSLGVPVAAASRTSEIQGANQLLELFDLGKYFIQREIYPGSKVTHFERLHHKTGVPFSQMVFFDDENRNIIDVGRLGVTCIHIRDGMSLQTLTQGLETFAKAQAGL.

Asp-11 serves as the catalytic Nucleophile. Residue Asp-11 participates in Mg(2+) binding. Residues Leu-12 and Asp-13 each coordinate phosphate. Residue Asp-13 coordinates Mg(2+). Residue Asp-13 is the Proton donor of the active site. Substrate is bound at residue Trp-20. The phosphate site is built by Ser-69, Arg-70, and Lys-100. Arg-70 provides a ligand contact to substrate. Asp-123 is a binding site for Mg(2+).

This sequence belongs to the HAD-like hydrolase superfamily. Requires Mg(2+) as cofactor.

The catalysed reaction is O-phospho-L-tyrosyl-[protein] + H2O = L-tyrosyl-[protein] + phosphate. Its activity is regulated as follows. Inhibited by vanadate and zinc, and slightly by calcium. Its function is as follows. Magnesium-dependent phosphatase which may act as a tyrosine phosphatase. This Mus musculus (Mouse) protein is Magnesium-dependent phosphatase 1 (Mdp1).